Reading from the N-terminus, the 515-residue chain is Integrator complex subunit 14 (515 aa).

A VWFA domain is found at P2 to L204. Positions 10, 12, and 86 each coordinate Mg(2+). An N6-acetyllysine modification is found at K418.

It belongs to the Integrator subunit 14 family. As to quaternary structure, component of the Integrator complex, composed of core subunits INTS1, INTS2, INTS3, INTS4, INTS5, INTS6, INTS7, INTS8, INTS9/RC74, INTS10, INTS11/CPSF3L, INTS12, INTS13, INTS14 and INTS15. The core complex associates with protein phosphatase 2A subunits PPP2CA and PPP2R1A, to form the Integrator-PP2A (INTAC) complex. INTS14 is part of the tail subcomplex, composed of INTS10, INTS13, INTS14 and INTS15.

The protein localises to the nucleus. Functionally, component of the integrator complex, a multiprotein complex that terminates RNA polymerase II (Pol II) transcription in the promoter-proximal region of genes. The integrator complex provides a quality checkpoint during transcription elongation by driving premature transcription termination of transcripts that are unfavorably configured for transcriptional elongation: the complex terminates transcription by (1) catalyzing dephosphorylation of the C-terminal domain (CTD) of Pol II subunit POLR2A/RPB1 and SUPT5H/SPT5, (2) degrading the exiting nascent RNA transcript via endonuclease activity and (3) promoting the release of Pol II from bound DNA. The integrator complex is also involved in terminating the synthesis of non-coding Pol II transcripts, such as enhancer RNAs (eRNAs), small nuclear RNAs (snRNAs), telomerase RNAs and long non-coding RNAs (lncRNAs). Within the integrator complex, INTS14 is part of the integrator tail module that acts as a platform for the recruitment of transcription factors at promoters. This chain is Integrator complex subunit 14, found in Rattus norvegicus (Rat).